We begin with the raw amino-acid sequence, 479 residues long: Ribosomal RNA small subunit methyltransferase F (479 aa).

S-adenosyl-L-methionine-binding positions include 125–131, E149, D176, and D194; that span reads AAAPGSK. C247 functions as the Nucleophile in the catalytic mechanism.

It belongs to the class I-like SAM-binding methyltransferase superfamily. RsmB/NOP family.

It is found in the cytoplasm. It catalyses the reaction cytidine(1407) in 16S rRNA + S-adenosyl-L-methionine = 5-methylcytidine(1407) in 16S rRNA + S-adenosyl-L-homocysteine + H(+). Its function is as follows. Specifically methylates the cytosine at position 1407 (m5C1407) of 16S rRNA. This Escherichia coli (strain SMS-3-5 / SECEC) protein is Ribosomal RNA small subunit methyltransferase F.